The sequence spans 282 residues: uncharacterized protein (282 aa).

A helical transmembrane segment spans residues 22-42 (YLFTLGSFVTMFFVLCISPVF).

Its subcellular location is the cell membrane. This is an uncharacterized protein from Bacillus anthracis.